We begin with the raw amino-acid sequence, 347 residues long: Inositol 2-dehydrogenase (347 aa).

The protein belongs to the Gfo/Idh/MocA family. As to quaternary structure, homotetramer.

The catalysed reaction is myo-inositol + NAD(+) = scyllo-inosose + NADH + H(+). In terms of biological role, involved in the oxidation of myo-inositol (MI) to 2-keto-myo-inositol (2KMI or 2-inosose). This Rubrobacter xylanophilus (strain DSM 9941 / JCM 11954 / NBRC 16129 / PRD-1) protein is Inositol 2-dehydrogenase.